The following is a 206-amino-acid chain: MSYTLPSLPYAYDALEPHFDKQTMEIHHTKHHQTYVNNANAALENLPEFADLPVEELITKLDQVPADKKTVLRNNAGGHANHSLFWKGLKKGTTLQGDLKAAIERDFGSVDNFKAEFEKAAATRFGSGWAWLVLKGDKLAVVSTANQDSPLMGEAISGASGFPILGLDVWEHAYYLKFQNRRPDYIKEFWNVVNWDEAAARFAAKK.

4 residues coordinate Mn(2+): His-27, His-82, Asp-168, and His-172.

Belongs to the iron/manganese superoxide dismutase family. As to quaternary structure, homodimer. Mn(2+) serves as cofactor.

The enzyme catalyses 2 superoxide + 2 H(+) = H2O2 + O2. Its function is as follows. Destroys superoxide anion radicals which are normally produced within the cells and which are toxic to biological systems. The protein is Superoxide dismutase [Mn] (sodA) of Salmonella typhi.